The sequence spans 473 residues: Ribulose bisphosphate carboxylase large chain (473 aa).

A propeptide spanning residues Met-1 to Ser-2 is cleaved from the precursor. The residue at position 3 (Pro-3) is an N-acetylproline. N6,N6,N6-trimethyllysine is present on Lys-14. Residues Asn-123 and Thr-173 each contribute to the substrate site. Residue Lys-175 is the Proton acceptor of the active site. Residue Lys-177 participates in substrate binding. Mg(2+) is bound by residues Lys-201, Asp-203, and Glu-204. The residue at position 201 (Lys-201) is an N6-carboxylysine. Catalysis depends on His-294, which acts as the Proton acceptor. Substrate-binding residues include Arg-295, His-327, and Ser-379.

The protein belongs to the RuBisCO large chain family. Type I subfamily. In terms of assembly, heterohexadecamer of 8 large chains and 8 small chains; disulfide-linked. The disulfide link is formed within the large subunit homodimers. Mg(2+) serves as cofactor. Post-translationally, the disulfide bond which can form in the large chain dimeric partners within the hexadecamer appears to be associated with oxidative stress and protein turnover.

Its subcellular location is the plastid. The protein localises to the chloroplast. It carries out the reaction 2 (2R)-3-phosphoglycerate + 2 H(+) = D-ribulose 1,5-bisphosphate + CO2 + H2O. The enzyme catalyses D-ribulose 1,5-bisphosphate + O2 = 2-phosphoglycolate + (2R)-3-phosphoglycerate + 2 H(+). RuBisCO catalyzes two reactions: the carboxylation of D-ribulose 1,5-bisphosphate, the primary event in carbon dioxide fixation, as well as the oxidative fragmentation of the pentose substrate in the photorespiration process. Both reactions occur simultaneously and in competition at the same active site. The chain is Ribulose bisphosphate carboxylase large chain from Sesbania sesban (Egyptian riverhemp).